We begin with the raw amino-acid sequence, 247 residues long: OCIA domain-containing protein 1 (247 aa).

The OCIA domain maps to 1–112; sequence MNGRADFREP…KKLENSPLGE (112 aa). Phosphoserine is present on residues S108, S116, and S123. Disordered regions lie at residues 113–153 and 167–230; these read ALRS…ADNI and SASM…MQER. 2 stretches are compositionally biased toward polar residues: residues 136–146 and 168–177; these read SNVSGQSSFGT and ASMNESTPTG. 2 stretches are compositionally biased toward basic and acidic residues: residues 192 to 210 and 218 to 230; these read ESPK…KNRE and HKTD…MQER. Residue S193 is modified to Phosphoserine.

This sequence belongs to the OCIAD1 family. In terms of assembly, interacts with OCIAD2. Interacts with STAT3. As to expression, expressed at high levels in the brain and at lower levels in the heart, ovary, testis and kidney. Expression is strongest in embryonic stem cells and in the blood vessels.

It is found in the endosome. Functionally, maintains stem cell potency. Increases STAT3 phosphorylation and controls ERK phosphorylation. May act as a scaffold, increasing STAT3 recruitment onto endosomes. The sequence is that of OCIA domain-containing protein 1 from Mus musculus (Mouse).